The primary structure comprises 1175 residues: DNA ligase 3 (1175 aa).

The disordered stretch occupies residues 195–243 (HDFDNDNGDGDDGDGDDNDDDDGDGDSDSDKKKKKSSGGSGSDSGSKKK). Over residues 199–221 (NDNGDGDDGDGDDNDDDDGDGDS) the composition is skewed to acidic residues. ATP is bound at residue Glu281. Catalysis depends on Lys283, which acts as the N6-AMP-lysine intermediate. Arg288 and Arg303 together coordinate ATP. Mg(2+)-binding residues include Glu334 and Glu432. Lys437, Arg448, and Lys452 together coordinate ATP. 2 disordered regions span residues 612 to 669 (PVGK…LKFV) and 829 to 869 (KSSP…KRGR). Low complexity-rich tracts occupy residues 622 to 635 (TTTT…TTTT) and 829 to 859 (KSSP…SSPS). One can recognise a BRCT 1 domain in the interval 883–976 (PSLPIFEDVN…KLLPLHEDYI (94 aa)). The interval 984-1036 (PDYSQSSSSSSMSIEEEKIVVTTTSDDPSEGNQQQQDKKVIKESKIIQSKDHS) is disordered. Low complexity predominate over residues 987–996 (SQSSSSSSMS). Residues 1004–1018 (VTTTSDDPSEGNQQQ) show a composition bias toward polar residues. A compositionally biased stretch (basic and acidic residues) spans 1019 to 1036 (QDKKVIKESKIIQSKDHS). Positions 1067 to 1174 (HLLSIFQECI…DLLDVKNYKL (108 aa)) constitute a BRCT 2 domain.

The protein belongs to the ATP-dependent DNA ligase family. Requires Mg(2+) as cofactor.

It localises to the nucleus. The enzyme catalyses ATP + (deoxyribonucleotide)n-3'-hydroxyl + 5'-phospho-(deoxyribonucleotide)m = (deoxyribonucleotide)n+m + AMP + diphosphate.. In terms of biological role, the alpha isoform interacts with DNA-repair protein XRCC1 and can correct defective DNA strand-break repair and sister chromatid exchange following treatment with ionizing radiation and alkylating agents. The beta isoform does not interact with XRCC1 and may be specifically involved in the completion of homologous recombination events that occur during meiotic prophase. The chain is DNA ligase 3 (lig3) from Dictyostelium discoideum (Social amoeba).